A 22-amino-acid chain; its full sequence is Major outer membrane protein (22 aa).

This sequence belongs to the Gram-negative porin family. As to quaternary structure, disulfide bond interactions within and between MOMP molecules and other components form high molecular-weight oligomers.

It localises to the cell outer membrane. Structural rigidity of the outer membrane of elementary bodies and porin forming, permitting diffusion of solutes through the intracellular reticulate body membrane. The protein is Major outer membrane protein (ompH) of Avibacterium gallinarum (Pasteurella gallinarum).